A 431-amino-acid polypeptide reads, in one-letter code: Adenylosuccinate synthetase (431 aa).

Residues 12 to 18 (GDEGKGK) and 40 to 42 (GHT) contribute to the GTP site. The Proton acceptor role is filled by Asp-13. Residues Asp-13 and Gly-40 each contribute to the Mg(2+) site. Residues 13-16 (DEGK), 38-41 (NAGH), Thr-130, Arg-144, Gln-224, Thr-239, and Arg-303 contribute to the IMP site. Catalysis depends on His-41, which acts as the Proton donor. Substrate is bound at residue 299–305 (STTGRPR). Residues Arg-305, 331–333 (KAD), and 413–415 (SIG) each bind GTP.

It belongs to the adenylosuccinate synthetase family. As to quaternary structure, homodimer. Mg(2+) serves as cofactor.

Its subcellular location is the cytoplasm. The enzyme catalyses IMP + L-aspartate + GTP = N(6)-(1,2-dicarboxyethyl)-AMP + GDP + phosphate + 2 H(+). Its pathway is purine metabolism; AMP biosynthesis via de novo pathway; AMP from IMP: step 1/2. Plays an important role in the de novo pathway of purine nucleotide biosynthesis. Catalyzes the first committed step in the biosynthesis of AMP from IMP. This Cytophaga hutchinsonii (strain ATCC 33406 / DSM 1761 / CIP 103989 / NBRC 15051 / NCIMB 9469 / D465) protein is Adenylosuccinate synthetase.